Consider the following 92-residue polypeptide: uncharacterized protein (92 aa).

This is an uncharacterized protein from Sulfolobus spindle-shape virus 1 (SSV1).